The following is a 916-amino-acid chain: Dual serine/threonine and tyrosine protein kinase (916 aa).

Over residues Met1–Thr19 the composition is skewed to basic and acidic residues. A disordered region spans residues Met1–Ser27. Positions Pro641–Leu895 constitute a Protein kinase domain. ATP-binding positions include Leu647–Val655 and Lys670. The active-site Proton acceptor is the Asp766.

The protein belongs to the protein kinase superfamily. Ser/Thr protein kinase family.

It is found in the cytoplasm. It localises to the cell membrane. Its subcellular location is the apical cell membrane. The protein resides in the basolateral cell membrane. The protein localises to the cell junction. The enzyme catalyses L-seryl-[protein] + ATP = O-phospho-L-seryl-[protein] + ADP + H(+). It carries out the reaction L-threonyl-[protein] + ATP = O-phospho-L-threonyl-[protein] + ADP + H(+). The catalysed reaction is L-tyrosyl-[protein] + ATP = O-phospho-L-tyrosyl-[protein] + ADP + H(+). May act as a positive regulator of ERK phosphorylation downstream of fibroblast growth factor-receptor activation. May induce both caspase-dependent apoptosis and caspase-independent cell death. May play a role in the embryonic development. This chain is Dual serine/threonine and tyrosine protein kinase (dstyk), found in Xenopus laevis (African clawed frog).